Consider the following 97-residue polypeptide: MGLLTCMFSSNSKESSSVRIKDSSISHPHTGQHISIRTFRELKAQQMSNPTWKKTETCLIMEFSRSMEDRLEEVANLPTTHMPRQSIQGPKLRPSIY.

2 disordered regions span residues 1-31 (MGLL…PHTG) and 75-97 (ANLP…PSIY). Gly2 is lipidated: N-myristoyl glycine; by host. The span at 77 to 88 (LPTTHMPRQSIQ) shows a compositional bias: polar residues.

Belongs to the geminiviridae protein AC4/C4 family.

The protein resides in the host cell membrane. Its function is as follows. Pathogenicity determinant. May act as a suppressor of RNA-mediated gene silencing, also known as post-transcriptional gene silencing (PTGS), a mechanism of plant viral defense that limits the accumulation of viral RNAs. This is Protein C4 from Tomato yellow leaf curl China virus (TYLCCNV).